The following is a 308-amino-acid chain: Ribosomal RNA small subunit methyltransferase A (308 aa).

S-adenosyl-L-methionine-binding residues include Asn-35, Val-37, Gly-62, Glu-83, Asp-113, and Asn-136.

The protein belongs to the class I-like SAM-binding methyltransferase superfamily. rRNA adenine N(6)-methyltransferase family. RsmA subfamily.

The protein resides in the cytoplasm. The enzyme catalyses adenosine(1518)/adenosine(1519) in 16S rRNA + 4 S-adenosyl-L-methionine = N(6)-dimethyladenosine(1518)/N(6)-dimethyladenosine(1519) in 16S rRNA + 4 S-adenosyl-L-homocysteine + 4 H(+). In terms of biological role, specifically dimethylates two adjacent adenosines (A1518 and A1519) in the loop of a conserved hairpin near the 3'-end of 16S rRNA in the 30S particle. May play a critical role in biogenesis of 30S subunits. In Bifidobacterium longum (strain NCC 2705), this protein is Ribosomal RNA small subunit methyltransferase A.